The following is a 684-amino-acid chain: Amino-acid acetyltransferase, mitochondrial (684 aa).

A disordered region spans residues 414–439 (PQDATNSASEPRDPSQLSTVATRRKR). The span at 415–434 (QDATNSASEPRDPSQLSTVA) shows a compositional bias: polar residues. The N-acetyltransferase domain maps to 505–674 (GKSRMTLNDP…YEGVCRGIEP (170 aa)).

This sequence belongs to the acetyltransferase family.

The protein resides in the mitochondrion. It carries out the reaction L-glutamate + acetyl-CoA = N-acetyl-L-glutamate + CoA + H(+). Its pathway is amino-acid biosynthesis; L-arginine biosynthesis; N(2)-acetyl-L-ornithine from L-glutamate: step 1/4. Functionally, N-acetylglutamate synthase involved in arginine biosynthesis. This Ajellomyces capsulatus (strain NAm1 / WU24) (Darling's disease fungus) protein is Amino-acid acetyltransferase, mitochondrial (ARG2).